The sequence spans 266 residues: Dihydropteroate synthase (266 aa).

Residues 12–260 (AAIMGILNVT…DVKANQEIVA (249 aa)) enclose the Pterin-binding domain. Asn19 is a binding site for Mg(2+). Residues Thr59, Asp93, Asn112, Asp176, Lys212, and 248–250 (RVH) contribute to the (7,8-dihydropterin-6-yl)methyl diphosphate site.

Belongs to the DHPS family. As to quaternary structure, homodimer or homotrimer. Mg(2+) is required as a cofactor.

It carries out the reaction (7,8-dihydropterin-6-yl)methyl diphosphate + 4-aminobenzoate = 7,8-dihydropteroate + diphosphate. It functions in the pathway cofactor biosynthesis; tetrahydrofolate biosynthesis; 7,8-dihydrofolate from 2-amino-4-hydroxy-6-hydroxymethyl-7,8-dihydropteridine diphosphate and 4-aminobenzoate: step 1/2. Its function is as follows. Catalyzes the condensation of para-aminobenzoate (pABA) with 6-hydroxymethyl-7,8-dihydropterin diphosphate (DHPt-PP) to form 7,8-dihydropteroate (H2Pte), the immediate precursor of folate derivatives. The protein is Dihydropteroate synthase (folP) of Streptococcus pyogenes.